Here is an 85-residue protein sequence, read N- to C-terminus: Conotoxin Mi15a (85 aa).

A signal peptide spans 1-23 (MEKLTVLILVATVLLTIQVLGQS). A propeptide spanning residues 24-49 (DRDKHLKRRPKQYATKRLSARMRGHR) is cleaved from the precursor. Q50 is modified (pyrrolidone carboxylic acid).

The protein belongs to the conotoxin O2 superfamily. Post-translationally, contains 4 disulfide bonds. In terms of tissue distribution, expressed by the venom duct.

Its subcellular location is the secreted. The sequence is that of Conotoxin Mi15a from Conus miles (Soldier cone).